The following is a 156-amino-acid chain: Large ribosomal subunit protein eL24 (156 aa).

A compositionally biased stretch (basic and acidic residues) spans 110 to 129 (KESKAKKQETQAAKKAEKAK). Residues 110–156 (KESKAKKQETQAAKKAEKAKNAANPKARVTSKQGAKGAPVKVAAKSR) are disordered. Low complexity predominate over residues 130–156 (NAANPKARVTSKQGAKGAPVKVAAKSR).

The protein belongs to the eukaryotic ribosomal protein eL24 family. In terms of assembly, component of the large ribosomal subunit (LSU). Mature N.crassa ribosomes consist of a small (40S) and a large (60S) subunit. The 40S small subunit contains 1 molecule of ribosomal RNA (18S rRNA) and at least 32 different proteins. The large 60S subunit contains 3 rRNA molecules (26S, 5.8S and 5S rRNA) and at least 42 different proteins.

The protein localises to the cytoplasm. Its function is as follows. Component of the ribosome, a large ribonucleoprotein complex responsible for the synthesis of proteins in the cell. The small ribosomal subunit (SSU) binds messenger RNAs (mRNAs) and translates the encoded message by selecting cognate aminoacyl-transfer RNA (tRNA) molecules. The large subunit (LSU) contains the ribosomal catalytic site termed the peptidyl transferase center (PTC), which catalyzes the formation of peptide bonds, thereby polymerizing the amino acids delivered by tRNAs into a polypeptide chain. The nascent polypeptides leave the ribosome through a tunnel in the LSU and interact with protein factors that function in enzymatic processing, targeting, and the membrane insertion of nascent chains at the exit of the ribosomal tunnel. In Neurospora crassa (strain ATCC 24698 / 74-OR23-1A / CBS 708.71 / DSM 1257 / FGSC 987), this protein is Large ribosomal subunit protein eL24 (rpl-24).